The sequence spans 591 residues: V-type ATP synthase alpha chain (591 aa).

Residue 233–240 (GPFGAGKT) coordinates ATP.

This sequence belongs to the ATPase alpha/beta chains family.

The catalysed reaction is ATP + H2O + 4 H(+)(in) = ADP + phosphate + 5 H(+)(out). Functionally, produces ATP from ADP in the presence of a proton gradient across the membrane. The V-type alpha chain is a catalytic subunit. This chain is V-type ATP synthase alpha chain, found in Streptococcus pyogenes serotype M49 (strain NZ131).